The following is a 382-amino-acid chain: Alkanesulfonate monooxygenase (382 aa).

Belongs to the SsuD family. Homotetramer.

It catalyses the reaction an alkanesulfonate + FMNH2 + O2 = an aldehyde + FMN + sulfite + H2O + 2 H(+). In terms of biological role, catalyzes the desulfonation of aliphatic sulfonates. This chain is Alkanesulfonate monooxygenase, found in Yersinia pseudotuberculosis serotype IB (strain PB1/+).